A 922-amino-acid chain; its full sequence is Autophagy-related protein 9B (922 aa).

Disordered regions lie at residues 1–22 (MVRR…DLGP) and 85–144 (TPHN…MGPL). Over 1–206 (MVRRTGWGGS…KIYSYHQRNG (206 aa)) the chain is Cytoplasmic. Polar residues predominate over residues 85 to 114 (TPHNVLPTPTTPSTQAHPTMIHTSASPSWG). The span at 115 to 124 (SHSTPPLASA) shows a compositional bias: low complexity. The Tyrosine-based sorting signal motif lies at 150–153 (YERL). A helical membrane pass occupies residues 207–227 (FACILLEDVFQLGQFIFIVTF). The Lumenal segment spans residues 228 to 275 (TTFLLRCVDYNVLFNNQPKNHTRRGPLHSKVTLSDAILPSAQCAEKIH). Residues 276-296 (DSPLLVFLLVLAAGFWLFQLL) form a helical membrane-spanning segment. Topologically, residues 297-437 (RSVCNLFSYW…GVLANRWRRT (141 aa)) are cytoplasmic. An intramembrane segment occupies 438–458 (VLLLAAVNLALSPLVLAWQVL). At 459–523 (HAFYSHVELL…RAAEPPAPLR (65 aa)) the chain is on the cytoplasmic side. The helical transmembrane segment at 524 to 544 (ALLARQLVFFSGALFAALLVL) threads the bilayer. Topologically, residues 545–550 (TIYDED) are lumenal. A helical membrane pass occupies residues 551 to 571 (VLAVEHVLTTMTALGVTATVA). Topologically, residues 572–624 (RSFIPEEQCQGRSSQLLLQAALAHMHYLPEEPGATGARASSYWQMAQLLQYRA) are cytoplasmic. Residues 625 to 645 (VSLLEELLSPLLTPLFLLFWF) lie within the membrane without spanning it. Residues 646-922 (RPRALEIIDF…QKEPLTGPLH (277 aa)) are Cytoplasmic-facing. Positions 848-922 (ELWGEASASS…QKEPLTGPLH (75 aa)) are disordered. Low complexity-rich tracts occupy residues 854–870 (SASS…QPGS) and 877–889 (SWSS…ASSP). Residues 890 to 899 (RQQWGTQRAQ) show a composition bias toward polar residues.

The protein belongs to the ATG9 family. In terms of assembly, homotrimer; forms a homotrimer with a central pore that forms a path between the two membrane leaflets. Expressed in heart, brain, and placenta and testis.

It localises to the preautophagosomal structure membrane. It carries out the reaction a 1,2-diacyl-sn-glycero-3-phosphocholine(in) = a 1,2-diacyl-sn-glycero-3-phosphocholine(out). It catalyses the reaction a 1,2-diacyl-sn-glycero-3-phospho-L-serine(in) = a 1,2-diacyl-sn-glycero-3-phospho-L-serine(out). The catalysed reaction is a 1,2-diacyl-sn-glycero-3-phosphoethanolamine(in) = a 1,2-diacyl-sn-glycero-3-phosphoethanolamine(out). In terms of biological role, phospholipid scramblase involved in autophagy by mediating autophagosomal membrane expansion. Cycles between the preautophagosomal structure/phagophore assembly site (PAS) and the cytoplasmic vesicle pool and supplies membrane for the growing autophagosome. Lipid scramblase activity plays a key role in preautophagosomal structure/phagophore assembly by distributing the phospholipids that arrive through ATG2 (ATG2A or ATG2B) from the cytoplasmic to the luminal leaflet of the bilayer, thereby driving autophagosomal membrane expansion. In addition to autophagy, also plays a role in necrotic cell death. The polypeptide is Autophagy-related protein 9B (Mus musculus (Mouse)).